We begin with the raw amino-acid sequence, 520 residues long: FNIP repeat-containing protein DDB_G0274063/DDB_G0272642 (520 aa).

Disordered regions lie at residues 47-86 and 100-121; these read QQQSNNNNNNNNNNNNNNNNNNFINFSNHTNNINNNIDNR and NISSSSPYTLTSTPSSSSSSSS. The segment covering 51–84 has biased composition (low complexity); the sequence is NNNNNNNNNNNNNNNNNNFINFSNHTNNINNNID. FNIP repeat units lie at residues 242 to 285, 286 to 331, 332 to 406, and 453 to 496; these read YNNN…FGES, FNQD…FGLS, YNQP…FGVQ, and FNQQ…FHNS.

This Dictyostelium discoideum (Social amoeba) protein is FNIP repeat-containing protein DDB_G0274063/DDB_G0272642.